The sequence spans 175 residues: Cytidylate kinase (175 aa).

ATP is bound at residue G7 to S15.

This sequence belongs to the cytidylate kinase family. Type 2 subfamily.

Its subcellular location is the cytoplasm. It catalyses the reaction CMP + ATP = CDP + ADP. The catalysed reaction is dCMP + ATP = dCDP + ADP. The chain is Cytidylate kinase from Methanocella arvoryzae (strain DSM 22066 / NBRC 105507 / MRE50).